Consider the following 124-residue polypeptide: Small ribosomal subunit protein uS12 (124 aa).

The tract at residues 1–32 is disordered; sequence MPTIQQLVRKGRQAKTTKTKTPALKGSPQRRG. Residues 9-18 show a composition bias toward basic residues; the sequence is RKGRQAKTTK. D89 is modified (3-methylthioaspartic acid). The disordered stretch occupies residues 105–124; the sequence is QGVRNRKQARSRYGAKKEKS. Basic residues predominate over residues 108–118; it reads RNRKQARSRYG.

This sequence belongs to the universal ribosomal protein uS12 family. In terms of assembly, part of the 30S ribosomal subunit. Contacts proteins S8 and S17. May interact with IF1 in the 30S initiation complex.

With S4 and S5 plays an important role in translational accuracy. Functionally, interacts with and stabilizes bases of the 16S rRNA that are involved in tRNA selection in the A site and with the mRNA backbone. Located at the interface of the 30S and 50S subunits, it traverses the body of the 30S subunit contacting proteins on the other side and probably holding the rRNA structure together. The combined cluster of proteins S8, S12 and S17 appears to hold together the shoulder and platform of the 30S subunit. The sequence is that of Small ribosomal subunit protein uS12 from Salinispora arenicola (strain CNS-205).